The sequence spans 427 residues: Peptidase B (427 aa).

The Mn(2+) site is built by Lys-195 and Asp-200. Residue Lys-207 is part of the active site. Positions 218, 277, and 279 each coordinate Mn(2+). Arg-281 is an active-site residue.

The protein belongs to the peptidase M17 family. In terms of assembly, homohexamer. It depends on Mn(2+) as a cofactor.

The protein resides in the cytoplasm. It catalyses the reaction Release of an N-terminal amino acid, Xaa, from a peptide or arylamide. Xaa is preferably Glu or Asp but may be other amino acids, including Leu, Met, His, Cys and Gln.. Functionally, probably plays an important role in intracellular peptide degradation. The polypeptide is Peptidase B (Salmonella choleraesuis (strain SC-B67)).